Consider the following 504-residue polypeptide: Maturase K (504 aa).

The protein belongs to the intron maturase 2 family. MatK subfamily.

Its subcellular location is the plastid. The protein resides in the chloroplast. Usually encoded in the trnK tRNA gene intron. Probably assists in splicing its own and other chloroplast group II introns. The protein is Maturase K of Lobularia maritima (Sweet alyssum).